Here is an 89-residue protein sequence, read N- to C-terminus: Cell division topological specificity factor (89 aa).

The protein belongs to the MinE family.

Its function is as follows. Prevents the cell division inhibition by proteins MinC and MinD at internal division sites while permitting inhibition at polar sites. This ensures cell division at the proper site by restricting the formation of a division septum at the midpoint of the long axis of the cell. This Klebsiella pneumoniae subsp. pneumoniae (strain ATCC 700721 / MGH 78578) protein is Cell division topological specificity factor.